Consider the following 205-residue polypeptide: MEEKISQAIDDPNVFCFQELWIECQEVQKSQPIDSAVLRTLEIFCRGDIRDASSEWNELRFKKLRLLTLIDLANRHVGSSVSFETILVHLQLDRLPPSDPTFTVEYYIMQAMMNQILVGKINAKTQTLHVSWALERFLDSKRIDEMKYSLDRFIERCSNILFQLDAGTPSVSKSFKRASRMSSSDGIDYMVFDKRPRPDDTDFDL.

The 135-residue stretch at 1–135 folds into the PCI domain; it reads MEEKISQAID…QTLHVSWALE (135 aa). Ser-183 is modified (phosphoserine).

Belongs to the CSN7/EIF3M family. CSN7 subfamily. In terms of assembly, component of the COP9 signalosome (CSN) complex.

Component of the COP9 signalosome (CSN) complex that acts as an regulator of the ubiquitin (Ubl) conjugation pathway by mediating the deneddylation of the cullin subunit of SCF-type E3 ubiquitin-protein ligase complexes. The sequence is that of COP9 signalosome complex subunit 7 (csn71) from Schizosaccharomyces pombe (strain 972 / ATCC 24843) (Fission yeast).